Consider the following 229-residue polypeptide: Ribosome maturation factor RimM (229 aa).

Residues 1–37 (MAGHDSGNAKRGRSPSFGVFVRKPVERTSAKGTSDGA) form a disordered region. Positions 148-229 (ADEFYWVDLI…RVVVDWEADY (82 aa)) constitute a PRC barrel domain.

This sequence belongs to the RimM family. Binds ribosomal protein uS19.

The protein resides in the cytoplasm. Its function is as follows. An accessory protein needed during the final step in the assembly of 30S ribosomal subunit, possibly for assembly of the head region. Essential for efficient processing of 16S rRNA. May be needed both before and after RbfA during the maturation of 16S rRNA. It has affinity for free ribosomal 30S subunits but not for 70S ribosomes. This chain is Ribosome maturation factor RimM, found in Burkholderia pseudomallei (strain 668).